The primary structure comprises 681 residues: Propionyl-CoA carboxylase alpha chain (681 aa).

Positions 1–466 (MFNKILIANR…TTAFIAEEYP (466 aa)) constitute a Biotin carboxylation domain. ATP contacts are provided by residues Lys116, 148–209 (SNQI…PRHI), Glu200, and Asn235. The 198-residue stretch at 120–317 (KKIAQEANVS…LVEQMIRVAA (198 aa)) folds into the ATP-grasp domain. Glu275, Glu288, and Asn290 together coordinate Mg(2+). Glu275, Glu288, and Asn290 together coordinate Mn(2+). Glu288 is a catalytic residue. Phe348 is a biotin binding site. The Biotinyl-binding domain occupies 602 to 681 (LMPEKLPPDT…AVDDVIMEFE (80 aa)). At Lys647 the chain carries N6-biotinyllysine.

In terms of assembly, the holoenzyme is a dodecamer composed of 6 PccA/alpha subunits and 6 PccB/beta subunits. It depends on Mg(2+) as a cofactor. Requires Mn(2+) as cofactor. The cofactor is biotin. Post-translationally, the biotin cofactor is covalently attached to the C-terminal biotinyl-binding domain and is required for the catalytic activity.

The catalysed reaction is propanoyl-CoA + hydrogencarbonate + ATP = (S)-methylmalonyl-CoA + ADP + phosphate + H(+). The protein operates within metabolic intermediate metabolism; propanoyl-CoA degradation; succinyl-CoA from propanoyl-CoA: step 1/3. In terms of biological role, this is one of the 2 subunits of the biotin-dependent propionyl-CoA carboxylase (PCC), the enzyme catalyzing the carboxylation of propionyl-CoA/propanoyl-CoA to D-methylmalonyl-CoA/(S)-methylmalonyl-CoA. Within the holoenzyme, the alpha subunit catalyzes the ATP-dependent carboxylation of the biotin carried by the biotin carboxyl carrier (BCC) domain, while the beta subunit then tranfers the carboxyl group from carboxylated biotin to propionyl-CoA. The polypeptide is Propionyl-CoA carboxylase alpha chain (Ruegeria pomeroyi (strain ATCC 700808 / DSM 15171 / DSS-3) (Silicibacter pomeroyi)).